The following is a 300-amino-acid chain: Nucleotide-binding protein Daci_5422 (300 aa).

Residue 10–17 (GMSGSGKS) participates in ATP binding. 59 to 62 (DARS) lines the GTP pocket.

It belongs to the RapZ-like family.

In terms of biological role, displays ATPase and GTPase activities. This Delftia acidovorans (strain DSM 14801 / SPH-1) protein is Nucleotide-binding protein Daci_5422.